The chain runs to 519 residues: Maturase K (519 aa).

The protein belongs to the intron maturase 2 family. MatK subfamily.

It localises to the plastid. Its subcellular location is the chloroplast. Usually encoded in the trnK tRNA gene intron. Probably assists in splicing its own and other chloroplast group II introns. The protein is Maturase K of Aesculus pavia (Red buckeye).